The chain runs to 319 residues: Taste receptor type 2 member 39 (319 aa).

Residues 1–16 (MAQPSNYWKQDVLPLS) lie on the Extracellular side of the membrane. A helical membrane pass occupies residues 17-37 (ILMLTLVATECTIGIIASGIV). Residues 38–65 (MAVNAVSWVQKKAISITTRILLLLSVSR) are Cytoplasmic-facing. Residues 66–86 (IGLQSIMLIEITSSIFNVAFY) form a helical membrane-spanning segment. The Extracellular portion of the chain corresponds to 87 to 97 (NSVLYRVSNVS). Asn95 carries an N-linked (GlcNAc...) asparagine glycan. The chain crosses the membrane as a helical span at residues 98-118 (FVFLNYCSLWFAALLSFFHFV). At 119 to 137 (KIANFSYPLFFKLKWRISE) the chain is on the cytoplasmic side. Residues 138-158 (LMPWLLWLSVFISFSSSMFFS) traverse the membrane as a helical segment. Residues 159–194 (KHKFTVNNNNSLSNNICNFTMKLYVVETNVVNVSFL) lie on the Extracellular side of the membrane. Asn167, Asn176, and Asn190 each carry an N-linked (GlcNAc...) asparagine glycan. A helical membrane pass occupies residues 195-215 (FISGILPPLTMFVATATLLIF). Over 216–247 (SLRRHTLNMRNSATGSRNPCIEAHMQAIKETS) the chain is Cytoplasmic. Residues 248–268 (CFLFLYILNAAALLLSTSNIV) form a helical membrane-spanning segment. The Extracellular segment spans residues 269-273 (DASLF). The chain crosses the membrane as a helical span at residues 274 to 294 (WSIVIRIVLPVYPAGHSVLLI). Residues 295–319 (QNNPGLRRTWKHLQSQIHLYLQNRF) lie on the Cytoplasmic side of the membrane.

It belongs to the G-protein coupled receptor T2R family.

The protein resides in the membrane. In terms of biological role, putative taste receptor which may play a role in the perception of bitterness. This chain is Taste receptor type 2 member 39 (Tas2r39), found in Mus musculus (Mouse).